Consider the following 322-residue polypeptide: Germ cell-specific gene 1-like protein (322 aa).

Residues 1-8 (MKTSRRGR) are Cytoplasmic-facing. A helical membrane pass occupies residues 9 to 29 (ALLAVALNLLALLFATTAFLT). The Extracellular segment spans residues 30-122 (TYWCQGTQRV…FIDLAPASEK (93 aa)). A helical membrane pass occupies residues 123 to 143 (GVLWLSVVSEVLYILLLVVGF). Residues 144–163 (SLMCLELVHSSSVIDGLKLN) are Cytoplasmic-facing. The chain crosses the membrane as a helical span at residues 164–184 (AFAAVFTVLSGLLGMVAHMMY). Residues 185-207 (TQVFQVTVSLGPEDWRPHSWDYG) lie on the Extracellular side of the membrane. The helical transmembrane segment at 208–228 (WSFCLAWGSFTCCMAASVTTL) threads the bilayer. Residues 229-322 (NSYTKTVIEF…RQCWVLGHWV (94 aa)) lie on the Cytoplasmic side of the membrane. A Phosphoserine modification is found at Ser274.

Belongs to the GSG1 family. Component of the inner core of AMPAR complexes. AMPAR complexes consist of an inner core made of 4 pore-forming GluA/GRIA proteins (GRIA1, GRIA2, GRIA3 and GRIA4) and 4 major auxiliary subunits arranged in a twofold symmetry. One of the two pairs of distinct binding sites is occupied either by CNIH2, CNIH3 or CACNG2, CACNG3. The other harbors CACNG2, CACNG3, CACNG4, CACNG8 or GSG1L. This inner core of AMPAR complexes is complemented by outer core constituents binding directly to the GluA/GRIA proteins at sites distinct from the interaction sites of the inner core constituents. Outer core constituents include at least PRRT1, PRRT2, CKAMP44/SHISA9, FRRS1L and NRN1. The proteins of the inner and outer core serve as a platform for other, more peripherally associated AMPAR constituents. Alone or in combination, these auxiliary subunits control the gating and pharmacology of the AMPAR complexes and profoundly impact their biogenesis and protein processing. As to expression, expressed in the brain, including hippocampus (at protein level).

The protein localises to the cell membrane. Its subcellular location is the synapse. In terms of biological role, as a component of the inner core of AMPAR complexes, modifies AMPA receptor (AMPAR) gating. In Mus musculus (Mouse), this protein is Germ cell-specific gene 1-like protein (Gsg1l).